A 233-amino-acid chain; its full sequence is Cysteine-rich venom protein LIO1 (233 aa).

The first 18 residues, 1–18 (MIVFILLSFAAVLQQSFG), serve as a signal peptide directing secretion. Residues 37 to 165 (VDTHNSYRRS…PYNYFYVCQY (129 aa)) enclose the SCP domain. Disulfide bonds link cysteine 74–cysteine 152, cysteine 91–cysteine 166, cysteine 147–cysteine 163, cysteine 185–cysteine 192, cysteine 188–cysteine 197, cysteine 210–cysteine 228, and cysteine 219–cysteine 232. In terms of domain architecture, ShKT spans 201 to 233 (CTSENVFTNCNDMVKESGCQDERMKSICPASCF).

The protein belongs to the CRISP family. Expressed by the venom gland.

It is found in the secreted. In terms of biological role, blocks contraction of smooth muscle elicited by high potassium-induced depolarization, but does not block caffeine-stimulated contraction. May target voltage-gated calcium channels on smooth muscle. This Erythrolamprus poecilogyrus (Water snake) protein is Cysteine-rich venom protein LIO1.